Here is a 973-residue protein sequence, read N- to C-terminus: Sensor histidine kinase TmoS (973 aa).

A PAS 1 domain is found at 32–103 (REELARIIFD…NQKRLVEAAS (72 aa)). In terms of domain architecture, PAC 1 spans 108 to 162 (VRCDIEILGKSGGREVIAVDFSLLPIRDEQENIVFLLAEGRNITDKKKAEAMLAL). A Histidine kinase 1 domain is found at 187–405 (KVSHELRTPL…LFQVKLPLNA (219 aa)). At histidine 190 the chain carries Phosphohistidine; by autocatalysis. Residues 452–567 (RVLIVEDNPD…ELRARVSNLI (116 aa)) form the Response regulatory domain. Aspartate 500 bears the 4-aspartylphosphate mark. In terms of domain architecture, PAS 2 spans 611–681 (SEARWKAVYE…QRLARLLQSG (71 aa)). The 53-residue stretch at 685-737 (YSVECSYLCKNGSTIWANASVSLMSPRVDEPQVILQIIDDITEKKQAQETLNQ) folds into the PAC 2 domain. The 217-residue stretch at 757–973 (YIAHEINQPL…ACFFVSIPVS (217 aa)) folds into the Histidine kinase 2 domain. Histidine 760 is modified (phosphohistidine).

Post-translationally, autophosphorylated. Activation requires a sequential transfer of a phosphate group from a His in the primary transmitter domain, to an Asp in the receiver domain and to a His in the secondary transmitter domain.

Its subcellular location is the cytoplasm. The enzyme catalyses ATP + protein L-histidine = ADP + protein N-phospho-L-histidine.. Its activity is regulated as follows. Activity is regulated by agonists and antagonists. Binding of agonists such as toluene or benzene to TmoS stimulates autophosphorylation. Toluene causes the most pronounced increase, followed by benzene, chlorobenzene and ethylbenzene. Activity is inhibited by antagonists such as o-xylene, o-chlorotoluene and trimethylbenzene isomers, which bind to TmoS but do not stimulate autophosphorylation. Member of the two-component regulatory system TmoS/TmoT involved in the regulation of toluene degradation. Probably phosphorylates TmoT via a four-step phosphorelay in response to toluene. Can also be induced by benzene and ethylbenzene. The chain is Sensor histidine kinase TmoS (tmoS) from Ectopseudomonas mendocina (Pseudomonas mendocina).